The primary structure comprises 344 residues: Anthranilate phosphoribosyltransferase (344 aa).

5-phospho-alpha-D-ribose 1-diphosphate contacts are provided by residues G85, G88–D89, T93, N95–T98, K113–S121, and S125. G85 is an anthranilate binding site. Residue S97 coordinates Mg(2+). R171 lines the anthranilate pocket. Mg(2+)-binding residues include D230 and E231.

Belongs to the anthranilate phosphoribosyltransferase family. As to quaternary structure, homodimer. Requires Mg(2+) as cofactor.

The enzyme catalyses N-(5-phospho-beta-D-ribosyl)anthranilate + diphosphate = 5-phospho-alpha-D-ribose 1-diphosphate + anthranilate. It functions in the pathway amino-acid biosynthesis; L-tryptophan biosynthesis; L-tryptophan from chorismate: step 2/5. Catalyzes the transfer of the phosphoribosyl group of 5-phosphorylribose-1-pyrophosphate (PRPP) to anthranilate to yield N-(5'-phosphoribosyl)-anthranilate (PRA). The chain is Anthranilate phosphoribosyltransferase from Acidovorax ebreus (strain TPSY) (Diaphorobacter sp. (strain TPSY)).